Here is a 208-residue protein sequence, read N- to C-terminus: MKNFLQQINSYIKEAFNAGKYLYNGLSVTFDHLRRRPVTVQYPYEKLIPSERYRGRIHYEFDKCIACEVCVRVCPINLPVVDWVMNKETKKKELRNYSIDFGVCIFCGNCVEYCPTNCLSMTEEYELATFDRHNLNFDNVALGRLPTNVTTDPSVKPLRELAYLPKGVMDPHEIPASDTRVGKLPEEVYDWMRPESNKNKDKVSNSNN.

4Fe-4S ferredoxin-type domains are found at residues 55 to 84 and 95 to 124; these read GRIH…VDWV and RNYS…MTEE. The [4Fe-4S] cluster site is built by cysteine 64, cysteine 67, cysteine 70, cysteine 74, cysteine 104, cysteine 107, cysteine 110, and cysteine 114.

The protein belongs to the complex I 23 kDa subunit family. In terms of assembly, NDH-1 is composed of at least 11 different subunits. [4Fe-4S] cluster is required as a cofactor.

The protein resides in the cellular thylakoid membrane. It carries out the reaction a plastoquinone + NADH + (n+1) H(+)(in) = a plastoquinol + NAD(+) + n H(+)(out). It catalyses the reaction a plastoquinone + NADPH + (n+1) H(+)(in) = a plastoquinol + NADP(+) + n H(+)(out). Functionally, NDH-1 shuttles electrons from an unknown electron donor, via FMN and iron-sulfur (Fe-S) centers, to quinones in the respiratory and/or the photosynthetic chain. The immediate electron acceptor for the enzyme in this species is believed to be plastoquinone. Couples the redox reaction to proton translocation, and thus conserves the redox energy in a proton gradient. This chain is NAD(P)H-quinone oxidoreductase subunit I, found in Prochlorococcus marinus (strain AS9601).